The chain runs to 441 residues: Ribulose bisphosphate carboxylase/oxygenase activase, chloroplastic (441 aa).

Residue 167-174 (VWGGKGQG) participates in ATP binding.

The protein belongs to the RuBisCO activase family.

It localises to the plastid. It is found in the chloroplast stroma. Functionally, activation of RuBisCO (ribulose-1,5-bisphosphate carboxylase/oxygenase; EC 4.1.1.39) involves the ATP-dependent carboxylation of the epsilon-amino group of lysine leading to a carbamate structure. In Phaseolus vulgaris (Kidney bean), this protein is Ribulose bisphosphate carboxylase/oxygenase activase, chloroplastic (RCA1).